The following is a 286-amino-acid chain: Phosphatidylserine decarboxylase proenzyme (286 aa).

Catalysis depends on charge relay system; for autoendoproteolytic cleavage activity residues aspartate 90, histidine 147, and serine 250. Serine 250 (schiff-base intermediate with substrate; via pyruvic acid; for decarboxylase activity) is an active-site residue. Pyruvic acid (Ser); by autocatalysis is present on serine 250.

Belongs to the phosphatidylserine decarboxylase family. PSD-B subfamily. Prokaryotic type I sub-subfamily. As to quaternary structure, heterodimer of a large membrane-associated beta subunit and a small pyruvoyl-containing alpha subunit. Pyruvate is required as a cofactor. Post-translationally, is synthesized initially as an inactive proenzyme. Formation of the active enzyme involves a self-maturation process in which the active site pyruvoyl group is generated from an internal serine residue via an autocatalytic post-translational modification. Two non-identical subunits are generated from the proenzyme in this reaction, and the pyruvate is formed at the N-terminus of the alpha chain, which is derived from the carboxyl end of the proenzyme. The autoendoproteolytic cleavage occurs by a canonical serine protease mechanism, in which the side chain hydroxyl group of the serine supplies its oxygen atom to form the C-terminus of the beta chain, while the remainder of the serine residue undergoes an oxidative deamination to produce ammonia and the pyruvoyl prosthetic group on the alpha chain. During this reaction, the Ser that is part of the protease active site of the proenzyme becomes the pyruvoyl prosthetic group, which constitutes an essential element of the active site of the mature decarboxylase.

Its subcellular location is the cell membrane. It catalyses the reaction a 1,2-diacyl-sn-glycero-3-phospho-L-serine + H(+) = a 1,2-diacyl-sn-glycero-3-phosphoethanolamine + CO2. It participates in phospholipid metabolism; phosphatidylethanolamine biosynthesis; phosphatidylethanolamine from CDP-diacylglycerol: step 2/2. Catalyzes the formation of phosphatidylethanolamine (PtdEtn) from phosphatidylserine (PtdSer). The chain is Phosphatidylserine decarboxylase proenzyme from Psychromonas ingrahamii (strain DSM 17664 / CCUG 51855 / 37).